The sequence spans 92 residues: Dolichol-phosphate mannosyltransferase subunit 3 (92 aa).

2 helical membrane passes run 8-28 and 37-57; these read LWGLAILGSTWVALTTGALGL and VLWPLPAYLLVSAGCYALGTV.

It belongs to the DPM3 family. In terms of assembly, component of the dolichol-phosphate mannose (DPM) synthase complex composed of DPM1, DPM2 and DPM3; within the complex, associates with DPM1 via its C-terminal domain and with DPM2 via its N-terminal portion. This interaction stabilizes DPM1 protein.

The protein resides in the endoplasmic reticulum membrane. The protein operates within protein modification; protein glycosylation. Its function is as follows. Stabilizer subunit of the dolichol-phosphate mannose (DPM) synthase complex; tethers catalytic subunit DPM1 to the endoplasmic reticulum. The sequence is that of Dolichol-phosphate mannosyltransferase subunit 3 (DPM3) from Homo sapiens (Human).